Here is a 115-residue protein sequence, read N- to C-terminus: NAD(P)H-quinone oxidoreductase subunit M (115 aa).

Belongs to the complex I NdhM subunit family. NDH-1 can be composed of about 15 different subunits; different subcomplexes with different compositions have been identified which probably have different functions.

The protein resides in the cellular thylakoid membrane. It carries out the reaction a plastoquinone + NADH + (n+1) H(+)(in) = a plastoquinol + NAD(+) + n H(+)(out). The catalysed reaction is a plastoquinone + NADPH + (n+1) H(+)(in) = a plastoquinol + NADP(+) + n H(+)(out). In terms of biological role, NDH-1 shuttles electrons from an unknown electron donor, via FMN and iron-sulfur (Fe-S) centers, to quinones in the respiratory and/or the photosynthetic chain. The immediate electron acceptor for the enzyme in this species is believed to be plastoquinone. Couples the redox reaction to proton translocation, and thus conserves the redox energy in a proton gradient. Cyanobacterial NDH-1 also plays a role in inorganic carbon-concentration. The protein is NAD(P)H-quinone oxidoreductase subunit M of Prochlorococcus marinus (strain MIT 9313).